Here is a 152-residue protein sequence, read N- to C-terminus: Large ribosomal subunit protein uL13 (152 aa).

The interval 133-152 is disordered; that stretch reads EHPHQAQKPQPLTINTIPGA. Residues 139 to 152 are compositionally biased toward polar residues; that stretch reads QKPQPLTINTIPGA.

It belongs to the universal ribosomal protein uL13 family. Part of the 50S ribosomal subunit.

In terms of biological role, this protein is one of the early assembly proteins of the 50S ribosomal subunit, although it is not seen to bind rRNA by itself. It is important during the early stages of 50S assembly. This Thermosynechococcus vestitus (strain NIES-2133 / IAM M-273 / BP-1) protein is Large ribosomal subunit protein uL13.